A 160-amino-acid chain; its full sequence is Cytochrome b6-f complex subunit 4 (160 aa).

Helical transmembrane passes span 36–56 (LLYIFPVVILGTIACVVGLAV), 95–115 (LLGIALQTLIPLGLMILPFIE), and 128–148 (IAMSVFLFGTFLTIYLGIGAC).

The protein belongs to the cytochrome b family. PetD subfamily. As to quaternary structure, the 4 large subunits of the cytochrome b6-f complex are cytochrome b6, subunit IV (17 kDa polypeptide, PetD), cytochrome f and the Rieske protein, while the 4 small subunits are PetG, PetL, PetM and PetN. The complex functions as a dimer.

Its subcellular location is the cellular thylakoid membrane. In terms of biological role, component of the cytochrome b6-f complex, which mediates electron transfer between photosystem II (PSII) and photosystem I (PSI), cyclic electron flow around PSI, and state transitions. The chain is Cytochrome b6-f complex subunit 4 from Prochlorococcus marinus (strain MIT 9301).